Here is an 85-residue protein sequence, read N- to C-terminus: MAHKKAGGSSRNGRDSEAKRLGVKRFGGETVLAGSIIVRQRGTKFHAGTNVGLGKDHTLFATATGKILFEVKGPLNRKYVSIVAE.

Residues 1–21 (MAHKKAGGSSRNGRDSEAKRL) form a disordered region.

The protein belongs to the bacterial ribosomal protein bL27 family.

The sequence is that of Large ribosomal subunit protein bL27 from Aeromonas hydrophila subsp. hydrophila (strain ATCC 7966 / DSM 30187 / BCRC 13018 / CCUG 14551 / JCM 1027 / KCTC 2358 / NCIMB 9240 / NCTC 8049).